We begin with the raw amino-acid sequence, 227 residues long: Cytidylate kinase (227 aa).

An ATP-binding site is contributed by 12–20 (GPSGAGKGT).

It belongs to the cytidylate kinase family. Type 1 subfamily.

It localises to the cytoplasm. It catalyses the reaction CMP + ATP = CDP + ADP. It carries out the reaction dCMP + ATP = dCDP + ADP. The sequence is that of Cytidylate kinase from Salmonella paratyphi A (strain ATCC 9150 / SARB42).